A 312-amino-acid polypeptide reads, in one-letter code: Deoxyribonuclease-1-like 1 (312 aa).

Residues 1 to 35 form the signal peptide; that stretch reads MPSGQPVFPRRVPDAYIAMRGLVVASLLILLVGGT. An N-linked (GlcNAc...) asparagine glycan is attached at N102. E113 is a catalytic residue. A glycan (N-linked (GlcNAc...) asparagine) is linked at N133. H164 is an active-site residue. A disulfide bridge links C203 with C240. N239 is a glycosylation site (N-linked (GlcNAc...) asparagine).

The protein belongs to the DNase I family.

The protein localises to the endoplasmic reticulum. The sequence is that of Deoxyribonuclease-1-like 1 (Dnase1l1) from Rattus norvegicus (Rat).